A 332-amino-acid polypeptide reads, in one-letter code: Cytochrome c oxidase subunit 2 (332 aa).

Positions 1-20 are cleaved as a signal peptide; the sequence is MKIPGSVITLLIGVVITVVS. A run of 2 helical transmembrane segments spans residues 48–68 and 87–107; these read MMTIATGLFLLVEGVLVYCLI and VPLEILWTAIPTVIVFTLAVY. 4 residues coordinate Cu cation: His-214, Cys-249, Cys-253, and His-257.

This sequence belongs to the cytochrome c oxidase subunit 2 family. Cu cation is required as a cofactor.

The protein resides in the cell membrane. The enzyme catalyses 4 Fe(II)-[cytochrome c] + O2 + 8 H(+)(in) = 4 Fe(III)-[cytochrome c] + 2 H2O + 4 H(+)(out). Subunits I and II form the functional core of the enzyme complex. Electrons originating in cytochrome c are transferred via heme a and Cu(A) to the binuclear center formed by heme a3 and Cu(B). This chain is Cytochrome c oxidase subunit 2 (ctaC), found in Synechocystis sp. (strain ATCC 27184 / PCC 6803 / Kazusa).